A 391-amino-acid polypeptide reads, in one-letter code: Ammonium transporter Amt1 (391 aa).

The Extracellular segment spans residues 1–7 (MSDGNVA). Residues 8-27 (WILASTALVMLMVPGVGFFY) form a helical membrane-spanning segment. Over 28 to 38 (AGMVRRKNAVN) the chain is Cytoplasmic. Residues 39 to 57 (MIALSFISLIITVLLWIFY) traverse the membrane as a helical segment. Topologically, residues 58–89 (GYSVSFGNDISGIIGGLNYALLSGVKGEDLLF) are extracellular. The helical transmembrane segment at 90–106 (MMYQMMFAAVTIAILTS) threads the bilayer. The Cytoplasmic segment spans residues 107-113 (AIAERAK). Residues 114–137 (VSSFILLSALWLTFVYAPFAHWLW) traverse the membrane as a helical segment. The Extracellular segment spans residues 138 to 152 (GGGWLAKLGALDFAG). Residues 153 to 170 (GMVVHISSGFAALAVAMT) traverse the membrane as a helical segment. The Cytoplasmic segment spans residues 171-188 (IGKRAGFEEYSIEPHSIP). Residues 189 to 208 (LTLIGAALLWFGWFGFNGGS) form a helical membrane-spanning segment. The Extracellular portion of the chain corresponds to 209–217 (ALAANDVAI). The helical transmembrane segment at 218–237 (NAVVVTNTSAAVAGFVWMVI) threads the bilayer. Residues 238-245 (GWIKGKPG) lie on the Cytoplasmic side of the membrane. Residues 246-263 (SLGIVSGAIAGLAAITPA) traverse the membrane as a helical segment. The Extracellular segment spans residues 264-268 (AGFVD). The chain crosses the membrane as a helical span at residues 269–287 (VKGAIVIGLVAGIVCYLAM). Topologically, residues 288–300 (DFRIKKKIDESLD) are cytoplasmic. The helical transmembrane segment at 301 to 319 (AWAIHGIGGLWGSVAVGIL) threads the bilayer. Residues 320–337 (ANPEVNGYAGLLFGNPQL) lie on the Extracellular side of the membrane. A helical transmembrane segment spans residues 338 to 363 (LVSQLIAVASTTAYAFLVTLILAKAV). Residues 364–391 (DAAVGLRVSSQEEYVGLDLSQHEEVAYT) lie on the Cytoplasmic side of the membrane.

This sequence belongs to the ammonia transporter channel (TC 1.A.11.2) family. In terms of assembly, homotrimer.

The protein localises to the cell membrane. Involved in the uptake of ammonium/ammonia (NH(4)(+)/NH(3)). Transport is electrogenic. Transport the ammonium and methylammonium cation with high specificity. This Archaeoglobus fulgidus (strain ATCC 49558 / DSM 4304 / JCM 9628 / NBRC 100126 / VC-16) protein is Ammonium transporter Amt1.